We begin with the raw amino-acid sequence, 546 residues long: Chaperonin GroEL (546 aa).

ATP is bound by residues threonine 30 to proline 33, lysine 51, aspartate 87 to threonine 91, glycine 415, asparagine 479 to alanine 481, and aspartate 495.

It belongs to the chaperonin (HSP60) family. As to quaternary structure, forms a cylinder of 14 subunits composed of two heptameric rings stacked back-to-back. Interacts with the co-chaperonin GroES.

The protein resides in the cytoplasm. It catalyses the reaction ATP + H2O + a folded polypeptide = ADP + phosphate + an unfolded polypeptide.. Together with its co-chaperonin GroES, plays an essential role in assisting protein folding. The GroEL-GroES system forms a nano-cage that allows encapsulation of the non-native substrate proteins and provides a physical environment optimized to promote and accelerate protein folding. The chain is Chaperonin GroEL from Pseudomonas putida (strain W619).